Reading from the N-terminus, the 67-residue chain is SPbeta prophage-derived uncharacterized protein YoqK (67 aa).

This chain is SPbeta prophage-derived uncharacterized protein YoqK (yoqK), found in Bacillus subtilis (strain 168).